Reading from the N-terminus, the 197-residue chain is Probable nicotinate-nucleotide adenylyltransferase (197 aa).

The protein belongs to the NadD family.

It catalyses the reaction nicotinate beta-D-ribonucleotide + ATP + H(+) = deamido-NAD(+) + diphosphate. Its pathway is cofactor biosynthesis; NAD(+) biosynthesis; deamido-NAD(+) from nicotinate D-ribonucleotide: step 1/1. Functionally, catalyzes the reversible adenylation of nicotinate mononucleotide (NaMN) to nicotinic acid adenine dinucleotide (NaAD). This is Probable nicotinate-nucleotide adenylyltransferase from Thermosipho melanesiensis (strain DSM 12029 / CIP 104789 / BI429).